Consider the following 101-residue polypeptide: Small ribosomal subunit protein uS14 (101 aa).

The interval 1 to 21 (MAKTSSVEKNNRRRKLADQYG) is disordered.

This sequence belongs to the universal ribosomal protein uS14 family. As to quaternary structure, part of the 30S ribosomal subunit. Contacts proteins S3 and S10.

In terms of biological role, binds 16S rRNA, required for the assembly of 30S particles and may also be responsible for determining the conformation of the 16S rRNA at the A site. In Mesorhizobium japonicum (strain LMG 29417 / CECT 9101 / MAFF 303099) (Mesorhizobium loti (strain MAFF 303099)), this protein is Small ribosomal subunit protein uS14.